The sequence spans 390 residues: MLGLKGCLTILIGYVIAVCALFSSRGRNPSLTDWEKLKDQKISNIDNFGLTGQHLLEFFQENLPFLSFSEEKYRHKHVSLYYDVFKEYILRRASSKKCLPVDSAIAKLNKDVNPMPVHSHNDYWRKLPLFEGLAYGASSTEADVWNIDEKILAVGHNEAYLDPVELTLDKLYTGPLLEILDEVNCQDSDADRKNGVFFNSPETSLFFYIDFKSDDNELTYKLLMEQYFKSLIDSGYLTYYDMKKDEIIWRPVTVILTGNYPTSLDILDNGNDNGYFESSQRFAFLDAPLLSLEPKYSKLSVAATVSFSQLMKHCGSDHWKVSLRGRMDSNEISCAKSIIDGAHALKLKTRIWGAPTWPANLVETISRQIIHDLGSDLLNLDNLFMASSLI.

Residues 1-17 form the signal peptide; sequence MLGLKGCLTILIGYVIA.

It belongs to the AIM6 family.

The protein is Altered inheritance of mitochondria protein 6 of Saccharomyces cerevisiae (strain ATCC 204508 / S288c) (Baker's yeast).